Here is a 341-residue protein sequence, read N- to C-terminus: Anthranilate phosphoribosyltransferase (341 aa).

5-phospho-alpha-D-ribose 1-diphosphate is bound by residues G84, 94 to 97 (NVST), 112 to 120 (KHGGRAASS), and S124. An anthranilate-binding site is contributed by G84. S96 contacts Mg(2+). Position 170 (R170) interacts with anthranilate. Residues D229 and E230 each contribute to the Mg(2+) site.

Belongs to the anthranilate phosphoribosyltransferase family. Homodimer. Mg(2+) is required as a cofactor.

It catalyses the reaction N-(5-phospho-beta-D-ribosyl)anthranilate + diphosphate = 5-phospho-alpha-D-ribose 1-diphosphate + anthranilate. It functions in the pathway amino-acid biosynthesis; L-tryptophan biosynthesis; L-tryptophan from chorismate: step 2/5. Catalyzes the transfer of the phosphoribosyl group of 5-phosphorylribose-1-pyrophosphate (PRPP) to anthranilate to yield N-(5'-phosphoribosyl)-anthranilate (PRA). The protein is Anthranilate phosphoribosyltransferase of Methylobacillus flagellatus (strain ATCC 51484 / DSM 6875 / VKM B-1610 / KT).